The sequence spans 324 residues: Glyoxylate/hydroxypyruvate reductase B (324 aa).

Catalysis depends on residues Arg-237 and Glu-266. His-285 serves as the catalytic Proton donor.

This sequence belongs to the D-isomer specific 2-hydroxyacid dehydrogenase family. GhrB subfamily. As to quaternary structure, homodimer.

It is found in the cytoplasm. The catalysed reaction is glycolate + NADP(+) = glyoxylate + NADPH + H(+). It catalyses the reaction (R)-glycerate + NAD(+) = 3-hydroxypyruvate + NADH + H(+). The enzyme catalyses (R)-glycerate + NADP(+) = 3-hydroxypyruvate + NADPH + H(+). Functionally, catalyzes the NADPH-dependent reduction of glyoxylate and hydroxypyruvate into glycolate and glycerate, respectively. The sequence is that of Glyoxylate/hydroxypyruvate reductase B from Salmonella paratyphi A (strain ATCC 9150 / SARB42).